A 200-amino-acid chain; its full sequence is Dephospho-CoA kinase (200 aa).

Residues 4 to 200 (VIGLTGGIGS…QKYIKMSHLY (197 aa)) form the DPCK domain. 12-17 (GSGKTT) is an ATP binding site.

Belongs to the CoaE family.

The protein resides in the cytoplasm. The catalysed reaction is 3'-dephospho-CoA + ATP = ADP + CoA + H(+). Its pathway is cofactor biosynthesis; coenzyme A biosynthesis; CoA from (R)-pantothenate: step 5/5. In terms of biological role, catalyzes the phosphorylation of the 3'-hydroxyl group of dephosphocoenzyme A to form coenzyme A. The chain is Dephospho-CoA kinase from Photobacterium profundum (strain SS9).